The sequence spans 289 residues: 4-diphosphocytidyl-2-C-methyl-D-erythritol kinase (289 aa).

The active site involves Lys-10. An ATP-binding site is contributed by 99–109; sequence PMGGGLGGGSS. Asp-141 is a catalytic residue.

Belongs to the GHMP kinase family. IspE subfamily. In terms of assembly, homodimer.

It carries out the reaction 4-CDP-2-C-methyl-D-erythritol + ATP = 4-CDP-2-C-methyl-D-erythritol 2-phosphate + ADP + H(+). It participates in isoprenoid biosynthesis; isopentenyl diphosphate biosynthesis via DXP pathway; isopentenyl diphosphate from 1-deoxy-D-xylulose 5-phosphate: step 3/6. Catalyzes the phosphorylation of the position 2 hydroxy group of 4-diphosphocytidyl-2C-methyl-D-erythritol. In Enterobacter sp. (strain 638), this protein is 4-diphosphocytidyl-2-C-methyl-D-erythritol kinase.